The sequence spans 351 residues: UDP-N-acetylglucosamine--N-acetylmuramyl-(pentapeptide) pyrophosphoryl-undecaprenol N-acetylglucosamine transferase (351 aa).

Residues 11–13 (TGG), N120, R161, S187, and Q281 each bind UDP-N-acetyl-alpha-D-glucosamine.

The protein belongs to the glycosyltransferase 28 family. MurG subfamily.

The protein localises to the cell inner membrane. It catalyses the reaction di-trans,octa-cis-undecaprenyl diphospho-N-acetyl-alpha-D-muramoyl-L-alanyl-D-glutamyl-meso-2,6-diaminopimeloyl-D-alanyl-D-alanine + UDP-N-acetyl-alpha-D-glucosamine = di-trans,octa-cis-undecaprenyl diphospho-[N-acetyl-alpha-D-glucosaminyl-(1-&gt;4)]-N-acetyl-alpha-D-muramoyl-L-alanyl-D-glutamyl-meso-2,6-diaminopimeloyl-D-alanyl-D-alanine + UDP + H(+). It functions in the pathway cell wall biogenesis; peptidoglycan biosynthesis. Its function is as follows. Cell wall formation. Catalyzes the transfer of a GlcNAc subunit on undecaprenyl-pyrophosphoryl-MurNAc-pentapeptide (lipid intermediate I) to form undecaprenyl-pyrophosphoryl-MurNAc-(pentapeptide)GlcNAc (lipid intermediate II). This chain is UDP-N-acetylglucosamine--N-acetylmuramyl-(pentapeptide) pyrophosphoryl-undecaprenol N-acetylglucosamine transferase, found in Rippkaea orientalis (strain PCC 8801 / RF-1) (Cyanothece sp. (strain PCC 8801)).